The chain runs to 616 residues: Chaperone protein HscA (616 aa).

This sequence belongs to the heat shock protein 70 family.

Chaperone involved in the maturation of iron-sulfur cluster-containing proteins. Has a low intrinsic ATPase activity which is markedly stimulated by HscB. Involved in the maturation of IscU. The chain is Chaperone protein HscA from Klebsiella pneumoniae subsp. pneumoniae (strain ATCC 700721 / MGH 78578).